A 173-amino-acid polypeptide reads, in one-letter code: FMN reductase (NADH) RutF 2 (173 aa).

This sequence belongs to the non-flavoprotein flavin reductase family. RutF subfamily.

It catalyses the reaction FMNH2 + NAD(+) = FMN + NADH + 2 H(+). Functionally, catalyzes the reduction of FMN to FMNH2 which is used to reduce pyrimidine by RutA via the Rut pathway. This chain is FMN reductase (NADH) RutF 2, found in Rhizobium rhizogenes (strain K84 / ATCC BAA-868) (Agrobacterium radiobacter).